A 362-amino-acid chain; its full sequence is MQNSTLYPTVYVLGNGQLGRMLRYAGAPLDIYVEPLAFNAPVFDLPENAIITAEIERWEKTPLTELLGNHKNFVNQHIFGLLADRFTQKSLLDELNLSTSPWCLLKDKNQWNDLFQTVGEKVVVKRRTGGYDGRGQWIIRDENRADITDDLFGEVIAEKFIPFDYEVSIVGARFKNGEKRFYPVTHNLQQNGILRYSVVDCAFPQQSVQQKQAETMLGKIMDKLGYVGVMAMECFVVGDKLLINELAPRVHNSGHWTQLGCSISQFELHLRALLNLPTPELQTFAPSVMINLIGTNHNPKWLNIPFAQLHWYGKEVRIGRKVGHINLSHPNKAVIIQQLEKLCTELPEDYQSGLNWAIEKLK.

Residues Arg-85, Lys-125, 130-136 (GYDGRGQ), 158-161 (EKFI), Glu-166, and 244-245 (NE) each bind ATP. In terms of domain architecture, ATP-grasp spans 89–274 (KSLLDELNLS…QFELHLRALL (186 aa)).

The protein belongs to the PurK/PurT family. In terms of assembly, homodimer.

The catalysed reaction is 5-amino-1-(5-phospho-beta-D-ribosyl)imidazole + hydrogencarbonate + ATP = 5-carboxyamino-1-(5-phospho-D-ribosyl)imidazole + ADP + phosphate + 2 H(+). Its pathway is purine metabolism; IMP biosynthesis via de novo pathway; 5-amino-1-(5-phospho-D-ribosyl)imidazole-4-carboxylate from 5-amino-1-(5-phospho-D-ribosyl)imidazole (N5-CAIR route): step 1/2. Functionally, catalyzes the ATP-dependent conversion of 5-aminoimidazole ribonucleotide (AIR) and HCO(3)(-) to N5-carboxyaminoimidazole ribonucleotide (N5-CAIR). This Haemophilus influenzae (strain ATCC 51907 / DSM 11121 / KW20 / Rd) protein is N5-carboxyaminoimidazole ribonucleotide synthase.